Here is a 63-residue protein sequence, read N- to C-terminus: MKAKEMQEKSVAELQATLIELLREQFTLRMQKATGQLAQTHLLSQVRRNIARVKTVLNDKAGN.

Belongs to the universal ribosomal protein uL29 family.

The polypeptide is Large ribosomal subunit protein uL29 (Marinomonas sp. (strain MWYL1)).